A 124-amino-acid polypeptide reads, in one-letter code: MAFKVVVSDTKTGKSYQFETESTALIGKKIGDEISGSVVELEGYKLKITGGSDKCGFAMRHDIHGAMKMRVLLKEGPGYNVKEKGLRRRKSLRGNTISKDVTLINTKVVEYGSAPLGGEPESTE.

Belongs to the eukaryotic ribosomal protein eS6 family.

This is Small ribosomal subunit protein eS6 from Methanococcus maripaludis (strain C7 / ATCC BAA-1331).